Consider the following 190-residue polypeptide: Hypoxanthine/guanine phosphoribosyltransferase (190 aa).

The protein belongs to the purine/pyrimidine phosphoribosyltransferase family. Archaeal HPRT subfamily. In terms of assembly, homodimer.

It is found in the cytoplasm. The catalysed reaction is IMP + diphosphate = hypoxanthine + 5-phospho-alpha-D-ribose 1-diphosphate. It catalyses the reaction GMP + diphosphate = guanine + 5-phospho-alpha-D-ribose 1-diphosphate. It functions in the pathway purine metabolism; IMP biosynthesis via salvage pathway; IMP from hypoxanthine: step 1/1. Catalyzes a salvage reaction resulting in the formation of IMP that is energically less costly than de novo synthesis. The polypeptide is Hypoxanthine/guanine phosphoribosyltransferase (Methanohalobium evestigatum (strain ATCC BAA-1072 / DSM 3721 / NBRC 107634 / OCM 161 / Z-7303)).